A 570-amino-acid chain; its full sequence is Proline--tRNA ligase (570 aa).

It belongs to the class-II aminoacyl-tRNA synthetase family. ProS type 1 subfamily. As to quaternary structure, homodimer.

The protein localises to the cytoplasm. It catalyses the reaction tRNA(Pro) + L-proline + ATP = L-prolyl-tRNA(Pro) + AMP + diphosphate. Functionally, catalyzes the attachment of proline to tRNA(Pro) in a two-step reaction: proline is first activated by ATP to form Pro-AMP and then transferred to the acceptor end of tRNA(Pro). As ProRS can inadvertently accommodate and process non-cognate amino acids such as alanine and cysteine, to avoid such errors it has two additional distinct editing activities against alanine. One activity is designated as 'pretransfer' editing and involves the tRNA(Pro)-independent hydrolysis of activated Ala-AMP. The other activity is designated 'posttransfer' editing and involves deacylation of mischarged Ala-tRNA(Pro). The misacylated Cys-tRNA(Pro) is not edited by ProRS. This is Proline--tRNA ligase from Shewanella pealeana (strain ATCC 700345 / ANG-SQ1).